Reading from the N-terminus, the 1235-residue chain is Insulin receptor substrate 1 (1235 aa).

The residue at position 3 (Ser3) is a Phosphoserine. Residues 3 to 133 are mediates interaction with PHIP; sequence SPPDTDGFSD…AGGGCGGSCS (131 aa). Residues 12 to 115 enclose the PH domain; it reads DVRKVGYLRK…WYQALLQLHN (104 aa). At Ser99 the chain carries Phosphoserine; by CK2. In terms of domain architecture, IRS-type PTB spans 155 to 259; sequence FKEVWQVILK…EAMRAMSDEF (105 aa). A disordered region spans residues 258–425; it reads EFRPRTKSQS…SDGGFISSDE (168 aa). A phosphoserine; by RPS6KB1 mark is found at Ser265 and Ser302. Low complexity predominate over residues 265–276; the sequence is SQSSSSCSNPIS. Ser307 carries the post-translational modification Phosphoserine; by IKKB, MAPK8 and RPS6KB1. Phosphoserine is present on residues Ser318, Ser325, Ser340, and Ser343. A compositionally biased stretch (basic residues) spans 349–358; it reads THAHRHRGSS. Composition is skewed to low complexity over residues 378–399 and 407–419; these read SPSA…GSTS and SSAS…SDGG. The residue at position 414 (Ser414) is a Phosphoserine. Thr441 and Thr448 each carry phosphothreonine. Phosphotyrosine; by INSR is present on Tyr460. A YXXM motif 1 motif is present at residues 460–463; that stretch reads YICM. Thr502 carries the post-translational modification Phosphothreonine; by CK2. The interval 520-539 is disordered; it reads THSAGTSPTISHQKTPSQSS. Position 522 is a phosphoserine; by RPS6KB1 (Ser522). Over residues 522 to 539 the composition is skewed to polar residues; that stretch reads SAGTSPTISHQKTPSQSS. 2 short sequence motifs (YXXM motif) span residues 546 to 549 and 608 to 611; these read YTEM and YMPM. At Tyr608 the chain carries Phosphotyrosine; by INSR. Ser612 is modified (phosphoserine). Position 628 is a phosphotyrosine; by INSR (Tyr628). Residues 628-631 carry the YXXM motif 4 motif; that stretch reads YMPM. The residue at position 632 (Ser632) is a Phosphoserine; by RPS6KB1 and ROCK2. Position 658 is a phosphotyrosine (Tyr658). The YXXM motif 5 signature appears at 658–661; the sequence is YMMM. A compositionally biased stretch (low complexity) spans 669–689; the sequence is PDIGGGSCSSSSISAAPSGSS. Residues 669 to 720 are disordered; that stretch reads PDIGGGSCSSSSISAAPSGSSYGKPWTNGVGGHHTHALPHAKPPVESGGGKL. Positions 727–730 match the YXXM motif 6 motif; that stretch reads YMNM. The interval 766-921 is disordered; that stretch reads FKHTQRPGEP…ATSRSSPSVR (156 aa). The span at 771-780 shows a compositional bias: basic and acidic residues; that stretch reads RPGEPEEGAR. Composition is skewed to low complexity over residues 785–794, 801–810, and 872–881; these read RLSSSSGRLR, DSSSSTSSDS, and QQQQQQQQQQ. Ser789 bears the Phosphoserine; by AMPK and SIK2 mark. Residue Ser891 is modified to Phosphoserine. Tyr895, Tyr939, and Tyr987 each carry phosphotyrosine; by INSR. The segment at 895–897 is GRB2-binding; that stretch reads YVN. 3 short sequence motifs (YXXM motif) span residues 939 to 942, 987 to 990, and 1010 to 1013; these read YMNM, YMTM, and YADM. Positions 1024-1165 are disordered; the sequence is LPRTTGAAPP…SAPGCGAAGG (142 aa). A compositionally biased stretch (low complexity) spans 1025 to 1046; sequence PRTTGAAPPPSSTASASASVTP. A compositionally biased stretch (polar residues) spans 1072-1084; sequence TRVNLSPNHNQSA. Ser1099 carries the phosphoserine modification. Ser1100 is modified (phosphoserine; by RPS6KB1). Residues 1101–1114 show a composition bias toward polar residues; the sequence is ETFSAPTRAANTVS. Gly residues predominate over residues 1118-1128; it reads GAAGGGSGGGS. Tyr1172 bears the Phosphotyrosine; by INSR mark. The interval 1177 to 1235 is disordered; the sequence is LVKDVKQHPQDCPSQQQSLPPPPPHQPLGSNEGSSPRRSSEDLSTYASINFQKQPEDRQ. A Glycyl lysine isopeptide (Lys-Gly) (interchain with G-Cter in ubiquitin) cross-link involves residue Lys1179. Residues 1204-1229 are compositionally biased toward polar residues; it reads LGSNEGSSPRRSSEDLSTYASINFQK. The residue at position 1222 (Tyr1222) is a Phosphotyrosine; by INSR.

As to quaternary structure, interacts with SOCS7. Interacts (via IRS-type PTB domain) with IGF1R and INSR (via the tyrosine-phosphorylated NPXY motif). Interacts with UBTF, FER and PIK3CA. Interacts (via phosphorylated YXXM motifs) with PIK3R1. Interacts with ROCK1. Interacts (via PH domain) with PHIP. Interacts with GRB2. Interacts with ALK. Interacts with EIF2AK2/PKR. Interacts with GKAP1. Interacts with DGKZ in the absence of insulin; insulin stimulation decreases this interaction. Found in a ternary complex with DGKZ and PIP5K1A in the absence of insulin stimulation. Interacts with SQSTM1; the interaction is disrupted by the presence of tensin TNS2. Interacts with NCK1 (via SH2 domain). Interacts with NCK2 (via SH3 domain). Interacts with SH2B1; this interaction enhances leptin-induced activation of the PI3-kinase pathway. Interacts with DVL2; this interaction promotes the Wnt/beta-catenin signaling pathway. Interacts with JAK1. Post-translationally, serine phosphorylation of IRS1 is a mechanism for insulin resistance. Ser-307 phosphorylation inhibits insulin action through disruption of IRS1 interaction with the insulin receptor, and Ser-789 phosphorylation is increased in the liver of insulin-resistant rats. Phosphorylation of Tyr-895 is required for GRB2-binding. Phosphorylated by ALK. Phosphorylated at Ser-265, Ser-302, Ser-632 and Ser-1100 by RPS6KB1; phosphorylation induces accelerated degradation of IRS1. Phosphorylated on tyrosine residues in response to insulin. In skeletal muscles, dephosphorylated on Tyr-608 by TNS2 under anabolic conditions; dephosphorylation results in the proteasomal degradation of IRS1. Ubiquitinated by the Cul7-RING(FBXW8) complex in a mTOR-dependent manner, leading to its degradation: the Cul7-RING(FBXW8) complex recognizes and binds IRS1 previously phosphorylated by S6 kinase (RPS6KB1 or RPS6KB2). Ubiquitinated by TRAF4 through 'Lys-29' linkage; this ubiquitination regulates the interaction of IRS1 with IGFR and IRS1 tyrosine phosphorylation upon IGF1 stimulation. In terms of processing, S-nitrosylation at by BLVRB inhibits its activity.

The protein resides in the cytoplasm. The protein localises to the nucleus. Its function is as follows. Signaling adapter protein that participates in the signal transduction from two prominent receptor tyrosine kinases, insulin receptor/INSR and insulin-like growth factor I receptor/IGF1R. Plays therefore an important role in development, growth, glucose homeostasis as well as lipid metabolism. Upon phosphorylation by the insulin receptor, functions as a signaling scaffold that propagates insulin action through binding to SH2 domain-containing proteins including the p85 regulatory subunit of PI3K, NCK1, NCK2, GRB2 or SHP2. Recruitment of GRB2 leads to the activation of the guanine nucleotide exchange factor SOS1 which in turn triggers the Ras/Raf/MEK/MAPK signaling cascade. Activation of the PI3K/AKT pathway is responsible for most of insulin metabolic effects in the cell, and the Ras/Raf/MEK/MAPK is involved in the regulation of gene expression and in cooperation with the PI3K pathway regulates cell growth and differentiation. Acts a positive regulator of the Wnt/beta-catenin signaling pathway through suppression of DVL2 autophagy-mediated degradation leading to cell proliferation. The polypeptide is Insulin receptor substrate 1 (Irs1) (Rattus norvegicus (Rat)).